A 352-amino-acid polypeptide reads, in one-letter code: Small glutamine-rich tetratricopeptide repeat-containing protein 2 (352 aa).

Residues 80–97 show a composition bias toward low complexity; the sequence is PAAASSSSTAPAAAAATP. A disordered region spans residues 80–103; that stretch reads PAAASSSSTAPAAAAATPSDEDLA. TPR repeat units follow at residues 105–138, 140–172, and 173–206; these read AEQL…NPNS, VYFS…DPKF, and GKAY…DPSN. The segment at 217–236 is disordered; it reads KEQLSSSSSSNANDATASRG.

The protein belongs to the SGT family.

In terms of biological role, co-chaperone that binds to the molecular chaperone Hsp70 and regulates Hsp70 ATPase activity. This Mycosarcoma maydis (Corn smut fungus) protein is Small glutamine-rich tetratricopeptide repeat-containing protein 2.